We begin with the raw amino-acid sequence, 485 residues long: MSDFDENFIEMTSYWAPPSSPSPRTILAMLEQTDNGLNPISEIFPQESLPRDHTDQSGQRSGLRERLAARVGFNLPTLNTEENMSPLDAFFRSSNVPNSPVVAISPGFSPSALLHTPNMVSDSSQIIPPSSATNYGPLEMVETSGEDNAAMMMFNNDLPYQPYNVDLPSLEVFDDIATEESFYIPSYEPHVDPIGTPLVTSFESELVDDAHTDIISIEDSESEDGNKDDDDEDFQYEDEDEDQYDQDQDVDEDEEEEKDEDNVALDDPQPPPPKRRRYEVSNMIGATRTSKTQRIILQMESDEDNPNDGYRWRKYGQKVVKGNPNPRSYFKCTNIECRVKKHVERGADNIKLVVTTYDGIHNHPSPPARRSNSSSRNRSAGATIPQNQNDRTSRLGRAPPTPTPPTPPPSSYTPEEMRPFSSLATEIDLTEVYMTGISMLPNIPVYENSGFMYQNDEPTMNAMPDGSDVYDGIMERLYFKFGVDM.

Disordered stretches follow at residues 43 to 62 (IFPQ…QRSG) and 215 to 293 (ISIE…SKTQ). The span at 216–264 (SIEDSESEDGNKDDDDEDFQYEDEDEDQYDQDQDVDEDEEEEKDEDNVA) shows a compositional bias: acidic residues. Positions 301-366 (SDEDNPNDGY…YDGIHNHPSP (66 aa)) form a DNA-binding region, WRKY. Residues C332, C337, H361, and H363 each coordinate Zn(2+). The tract at residues 358-417 (DGIHNHPSPPARRSNSSSRNRSAGATIPQNQNDRTSRLGRAPPTPTPPTPPPSSYTPEEM) is disordered. The segment covering 368–380 (ARRSNSSSRNRSA) has biased composition (low complexity). Over residues 399 to 411 (PPTPTPPTPPPSS) the composition is skewed to pro residues.

The protein belongs to the WRKY group I family. In terms of assembly, interacts with IKU1. Expressed in male gametophytes (pollen) and in the endosperm of fertilized ovules.

It localises to the nucleus. Its function is as follows. Transcription factor. Interacts specifically with the W box (5'-(T)TGAC[CT]-3'), a frequently occurring elicitor-responsive cis-acting element. Modulates seed size by negatively regulating the cellularization of syncytial endosperm. The protein is Probable WRKY transcription factor 10 (WRKY10) of Arabidopsis thaliana (Mouse-ear cress).